Reading from the N-terminus, the 341-residue chain is tRNA N6-adenosine threonylcarbamoyltransferase (341 aa).

Fe cation is bound by residues His-111 and His-115. Substrate is bound by residues 134-138, Asp-167, Gly-180, and Asn-276; that span reads LVSGG. Asp-304 serves as a coordination point for Fe cation.

Belongs to the KAE1 / TsaD family. It depends on Fe(2+) as a cofactor.

It is found in the cytoplasm. The catalysed reaction is L-threonylcarbamoyladenylate + adenosine(37) in tRNA = N(6)-L-threonylcarbamoyladenosine(37) in tRNA + AMP + H(+). Functionally, required for the formation of a threonylcarbamoyl group on adenosine at position 37 (t(6)A37) in tRNAs that read codons beginning with adenine. Is involved in the transfer of the threonylcarbamoyl moiety of threonylcarbamoyl-AMP (TC-AMP) to the N6 group of A37, together with TsaE and TsaB. TsaD likely plays a direct catalytic role in this reaction. This Ectopseudomonas mendocina (strain ymp) (Pseudomonas mendocina) protein is tRNA N6-adenosine threonylcarbamoyltransferase.